A 95-amino-acid chain; its full sequence is MPGRTPTYKLPPLPRLKVKKPVIKQEANRCLVLMSNLLQCWSSNGHMNPVCEKLATDLKACTSQNVMGSNQKPRKSTINYHAARLYDRISGKPHD.

The region spanning 27 to 69 (ANRCLVLMSNLLQCWSSNGHMNPVCEKLATDLKACTSQNVMGS) is the CHCH domain. 2 consecutive short sequence motifs (cx9C motif) follow at residues 30–40 (CLVLMSNLLQC) and 51–61 (CEKLATDLKAC). 2 disulfides stabilise this stretch: C30/C61 and C40/C51.

This sequence belongs to the mitochondrion-specific ribosomal protein mS37 family. Component of the mitochondrial small ribosomal subunit.

It localises to the mitochondrion. Involved in mitochondrial genome encoded proteins translation. This is Small ribosomal subunit protein mS37 (MRP10) from Eremothecium gossypii (strain ATCC 10895 / CBS 109.51 / FGSC 9923 / NRRL Y-1056) (Yeast).